The following is a 321-amino-acid chain: Chloroplastic calcium uniporter protein (321 aa).

Residues 1–56 (MSSKKSLVQSLFNISKTYSRISGLTRMRPTKSGGIPPDAGDSGIRRRFLHKRAFFS) constitute a chloroplast transit peptide. Helical transmembrane passes span 223–243 (LWAG…LTFW) and 249–269 (VMEP…YAFF). Residues 247–255 (WDVMEPICF) carry the Selectivity filter motif. Position 251 (E251) interacts with Ca(2+).

It belongs to the MCU (TC 1.A.77) family.

The protein resides in the plastid. It localises to the chloroplast membrane. The catalysed reaction is Ca(2+)(in) = Ca(2+)(out). Its function is as follows. Chloroplastic membrane calcium uniporter that mediates calcium uptake into chloroplast stroma. Constitutes a pore-forming and calcium-conducting subunit. Chloroplastic calcium homeostasis plays key roles in cellular physiology. Promotes calcium uptake into chloroplast stroma in response to osmotic-stress, fine-tuning cytosolic MAPK3/MAPK6 phosphorylation and affecting stomata opening. The chain is Chloroplastic calcium uniporter protein from Arabidopsis thaliana (Mouse-ear cress).